The following is a 123-amino-acid chain: UPF0231 protein plu3616 (123 aa).

Belongs to the UPF0231 family.

This Photorhabdus laumondii subsp. laumondii (strain DSM 15139 / CIP 105565 / TT01) (Photorhabdus luminescens subsp. laumondii) protein is UPF0231 protein plu3616.